The following is a 314-amino-acid chain: Olfactory receptor 1E2 (314 aa).

At 1 to 25 (MMGQNQTSISDFLLLGLPIQPEQQN) the chain is on the extracellular side. N-linked (GlcNAc...) asparagine glycosylation occurs at asparagine 5. Residues 26-49 (LCYALFLAMYLTTLLGNLLIIVLI) form a helical membrane-spanning segment. The Cytoplasmic portion of the chain corresponds to 50 to 57 (RLDSHLHT). Residues 58–79 (PMYLFLSNLSFSDLCFSSVTIP) traverse the membrane as a helical segment. Residues 80–100 (KLLQNMQNQDPSIPYADCLTQ) lie on the Extracellular side of the membrane. Residues cysteine 97 and cysteine 189 are joined by a disulfide bond. The chain crosses the membrane as a helical span at residues 101 to 120 (MHFFLLFGDLESFLLVAMAY). Residues 121–139 (DRYVAICFPLHYTAIMSPM) are Cytoplasmic-facing. Residues 140–158 (LCLSVVALSWVLTTFHAML) traverse the membrane as a helical segment. The Extracellular segment spans residues 159–196 (HTLLMARLCFCADNVIPHFFCDMSALLKLACSDTRVNE). The chain crosses the membrane as a helical span at residues 197–219 (WVIFIMGGLIVVIPFLLILGSYA). Residues 220–236 (RIVSSILKVPSFKGICK) are Cytoplasmic-facing. Residues 237–260 (ALSTCGSHLSVVSLFYGTVIGLYL) traverse the membrane as a helical segment. The Extracellular portion of the chain corresponds to 261–272 (CPSANSSTLKDT). Asparagine 265 carries N-linked (GlcNAc...) asparagine glycosylation. A helical membrane pass occupies residues 273 to 292 (VMAMMYTVVTPMLNPFIYSL). The Cytoplasmic portion of the chain corresponds to 293 to 314 (RNRDMKGALERVICKRKNPFLL).

It belongs to the G-protein coupled receptor 1 family.

The protein localises to the cell membrane. Its function is as follows. Odorant receptor. The sequence is that of Olfactory receptor 1E2 (OR1E2) from Pan troglodytes (Chimpanzee).